The chain runs to 130 residues: Fluoride-specific ion channel FluC (130 aa).

4 consecutive transmembrane segments (helical) span residues 3-23 (LVFLWAALGGAIGSSLRYFVG), 38-58 (LGTFSVNLIGCFIIGFMGHLA), 67-87 (FGIFFVTGVLGGFTTFSSYGL), and 102-122 (ISYVLGTNLLGLIGVAIGWFL). The Na(+) site is built by Gly77 and Thr80.

This sequence belongs to the fluoride channel Fluc/FEX (TC 1.A.43) family.

The protein localises to the cell inner membrane. The catalysed reaction is fluoride(in) = fluoride(out). With respect to regulation, na(+) is not transported, but it plays an essential structural role and its presence is essential for fluoride channel function. Fluoride-specific ion channel. Important for reducing fluoride concentration in the cell, thus reducing its toxicity. The protein is Fluoride-specific ion channel FluC of Helicobacter pylori (strain J99 / ATCC 700824) (Campylobacter pylori J99).